Consider the following 858-residue polypeptide: Bifunctional uridylyltransferase/uridylyl-removing enzyme (858 aa).

The interval 1-324 is uridylyltransferase; sequence MSAHAAPSPE…PATSGITRVL (324 aa). Residues 325-681 form a uridylyl-removing region; sequence SPDRFVEKQG…ARPSPIGDAL (357 aa). In terms of domain architecture, HD spans 443–565; sequence VDQHILMVLR…VGNERYLTAL (123 aa). 2 consecutive ACT domains span residues 682 to 761 and 790 to 858; these read QVLV…PEPS and ILSV…AIAV.

The protein belongs to the GlnD family. It depends on Mg(2+) as a cofactor.

The enzyme catalyses [protein-PII]-L-tyrosine + UTP = [protein-PII]-uridylyl-L-tyrosine + diphosphate. It catalyses the reaction [protein-PII]-uridylyl-L-tyrosine + H2O = [protein-PII]-L-tyrosine + UMP + H(+). With respect to regulation, uridylyltransferase (UTase) activity is inhibited by glutamine, while glutamine activates uridylyl-removing (UR) activity. Modifies, by uridylylation and deuridylylation, the PII regulatory proteins (GlnB and homologs), in response to the nitrogen status of the cell that GlnD senses through the glutamine level. Under low glutamine levels, catalyzes the conversion of the PII proteins and UTP to PII-UMP and PPi, while under higher glutamine levels, GlnD hydrolyzes PII-UMP to PII and UMP (deuridylylation). Thus, controls uridylylation state and activity of the PII proteins, and plays an important role in the regulation of nitrogen fixation and metabolism. This Burkholderia lata (strain ATCC 17760 / DSM 23089 / LMG 22485 / NCIMB 9086 / R18194 / 383) protein is Bifunctional uridylyltransferase/uridylyl-removing enzyme.